Consider the following 828-residue polypeptide: Outer membrane usher protein MrkC (828 aa).

An N-terminal signal peptide occupies residues methionine 1 to alanine 18. A disulfide bond links cysteine 813 and cysteine 827.

This sequence belongs to the fimbrial export usher family.

It is found in the cell outer membrane. Functionally, involved in the export and assembly of the type 3 fimbrial subunit (MrkA). The sequence is that of Outer membrane usher protein MrkC (mrkC) from Klebsiella pneumoniae.